Consider the following 514-residue polypeptide: Alanine--glyoxylate aminotransferase 2, mitochondrial (514 aa).

A mitochondrion-targeting transit peptide spans 1-41 (MTLIWRHLLRPLCLVTSAPRILEMHPFLSLGTSRTSVTKLS). K71 is modified (N6-acetyllysine; alternate). At K71 the chain carries N6-succinyllysine; alternate. K84 is modified (N6-acetyllysine). The residue at position 262 (K262) is an N6-acetyllysine; alternate. K262 is subject to N6-succinyllysine; alternate. N6-succinyllysine is present on K304. Position 350 is an N6-(pyridoxal phosphate)lysine (K350). N6-acetyllysine; alternate is present on residues K417 and K420. N6-succinyllysine; alternate occurs at positions 417 and 420.

The protein belongs to the class-III pyridoxal-phosphate-dependent aminotransferase family. In terms of assembly, homotetramer. Requires pyridoxal 5'-phosphate as cofactor. Expressed in the convoluted tubule in the kidney and in the liver hepatocytes (at protein level).

The protein resides in the mitochondrion. The catalysed reaction is glyoxylate + L-alanine = glycine + pyruvate. It catalyses the reaction (R)-3-amino-2-methylpropanoate + pyruvate = 2-methyl-3-oxopropanoate + L-alanine. It carries out the reaction 3-oxopropanoate + L-alanine = beta-alanine + pyruvate. The enzyme catalyses 2-oxobutanoate + L-alanine = (2S)-2-aminobutanoate + pyruvate. The catalysed reaction is N(omega),N(omega)-dimethyl-L-arginine + pyruvate = 5-(3,3-dimethylguanidino)-2-oxopentanoate + L-alanine. It catalyses the reaction N(omega),N('omega)-dimethyl-L-arginine + pyruvate = 5-(3,3'-dimethylguanidino)-2-oxopentanoate + L-alanine. It carries out the reaction N(omega),N(omega)-dimethyl-L-arginine + glyoxylate = 5-(3,3-dimethylguanidino)-2-oxopentanoate + glycine. The enzyme catalyses N(omega),N('omega)-dimethyl-L-arginine + glyoxylate = 5-(3,3'-dimethylguanidino)-2-oxopentanoate + glycine. The catalysed reaction is N(omega)-methyl-L-arginine + pyruvate = 5-(3-methylguanidino)-2-oxopentanoate + L-alanine. It catalyses the reaction N(omega)-methyl-L-arginine + glyoxylate = 5-(3-methylguanidino)-2-oxopentanoate + glycine. It carries out the reaction L-ornithine + pyruvate = 5-amino-2-oxopentanoate + L-alanine. The enzyme catalyses L-ornithine + glyoxylate = 5-amino-2-oxopentanoate + glycine. The catalysed reaction is (2S)-2-aminobutanoate + glyoxylate = 2-oxobutanoate + glycine. It catalyses the reaction N(omega),N(omega)-dimethyl-L-arginine + oxaloacetate = 5-(3,3-dimethylguanidino)-2-oxopentanoate + L-aspartate. It carries out the reaction oxaloacetate + L-alanine = L-aspartate + pyruvate. The enzyme catalyses N(omega),N(omega)-dimethyl-L-arginine + 2-oxobutanoate = 5-(3,3-dimethylguanidino)-2-oxopentanoate + (2S)-2-aminobutanoate. The catalysed reaction is 2-oxopentanoate + N(omega),N(omega)-dimethyl-L-arginine = 5-(3,3-dimethylguanidino)-2-oxopentanoate + L-2-aminopentanoate. It catalyses the reaction 2-oxohexanoate + N(omega),N(omega)-dimethyl-L-arginine = L-2-aminohexanoate + 5-(3,3-dimethylguanidino)-2-oxopentanoate. Multifunctional aminotransferase with a broad substrate specificity. Catalyzes the conversion of glyoxylate to glycine using alanine as the amino donor. Catalyzes metabolism of not L- but the D-isomer of D-beta-aminoisobutyric acid to generate 2-methyl-3-oxopropanoate and alanine. Catalyzes the transfer of the amino group from beta-alanine to pyruvate to yield L-alanine and 3-oxopropanoate. Can metabolize NG-monomethyl-L-arginine (NMMA), asymmetric NG,NG-dimethyl-L-arginine (ADMA) and symmetric NG,N'G-dimethyl-L-arginine (SDMA). ADMA is a potent inhibitor of nitric-oxide (NO) synthase, and this activity provides mechanism through which the kidney regulates blood pressure. This Homo sapiens (Human) protein is Alanine--glyoxylate aminotransferase 2, mitochondrial (AGXT2).